The sequence spans 73 residues: Neurotoxin Cex13 (73 aa).

Positions 1-7 are cleaved as a signal peptide; the sequence is ATGNVWA. The LCN-type CS-alpha/beta domain maps to 8–71; it reads KDGYLVIIKT…TWPLPDKTCG (64 aa). 4 disulfides stabilise this stretch: Cys19–Cys70, Cys23–Cys46, Cys32–Cys51, and Cys36–Cys53. Cys70 carries the cysteine amide modification. The propeptide occupies 71-73; that stretch reads GTK.

This sequence belongs to the long (4 C-C) scorpion toxin superfamily. Sodium channel inhibitor family. Beta subfamily. Expressed by the venom gland.

It is found in the secreted. In terms of biological role, beta toxins bind voltage-independently at site-4 of sodium channels (Nav) and shift the voltage of activation toward more negative potentials thereby affecting sodium channel activation and promoting spontaneous and repetitive firing. This chain is Neurotoxin Cex13, found in Centruroides exilicauda (Bark scorpion).